The following is a 245-amino-acid chain: Probable phosphatase Ent638_1550 (245 aa).

Residues H7, H9, H15, H40, E73, H101, H131, D192, and H194 each coordinate Zn(2+).

Belongs to the PHP family. Homotrimer. It depends on Zn(2+) as a cofactor.

In Enterobacter sp. (strain 638), this protein is Probable phosphatase Ent638_1550.